Consider the following 267-residue polypeptide: 4-hydroxy-tetrahydrodipicolinate reductase (267 aa).

NAD(+)-binding positions include 8–13 (GAAGRM) and aspartate 34. Residue arginine 35 coordinates NADP(+). Residues 98–100 (GTT) and 122–125 (AANF) contribute to the NAD(+) site. Histidine 155 functions as the Proton donor/acceptor in the catalytic mechanism. Histidine 156 lines the (S)-2,3,4,5-tetrahydrodipicolinate pocket. Lysine 159 (proton donor) is an active-site residue. 165 to 166 (GT) is a (S)-2,3,4,5-tetrahydrodipicolinate binding site.

Belongs to the DapB family.

It localises to the cytoplasm. It carries out the reaction (S)-2,3,4,5-tetrahydrodipicolinate + NAD(+) + H2O = (2S,4S)-4-hydroxy-2,3,4,5-tetrahydrodipicolinate + NADH + H(+). The catalysed reaction is (S)-2,3,4,5-tetrahydrodipicolinate + NADP(+) + H2O = (2S,4S)-4-hydroxy-2,3,4,5-tetrahydrodipicolinate + NADPH + H(+). The protein operates within amino-acid biosynthesis; L-lysine biosynthesis via DAP pathway; (S)-tetrahydrodipicolinate from L-aspartate: step 4/4. Catalyzes the conversion of 4-hydroxy-tetrahydrodipicolinate (HTPA) to tetrahydrodipicolinate. In Pseudomonas savastanoi pv. phaseolicola (strain 1448A / Race 6) (Pseudomonas syringae pv. phaseolicola (strain 1448A / Race 6)), this protein is 4-hydroxy-tetrahydrodipicolinate reductase.